A 473-amino-acid chain; its full sequence is Cell division protein FtsP (473 aa).

The tat-type signal signal peptide spans 1 to 27 (MSLSRRQFIQASGLAMCLGALPFAVQA).

It belongs to the FtsP family. Predicted to be exported by the Tat system. The position of the signal peptide cleavage has not been experimentally proven.

It is found in the periplasm. In terms of biological role, cell division protein that is required for growth during stress conditions. May be involved in protecting or stabilizing the divisomal assembly under conditions of stress. This Xenorhabdus nematophila (strain ATCC 19061 / DSM 3370 / CCUG 14189 / LMG 1036 / NCIMB 9965 / AN6) protein is Cell division protein FtsP.